A 183-amino-acid chain; its full sequence is MLGLRNIILLSPPPTQITRPSLPPVNFAAVEDNNTVGEKVCRDCGNRAKKECLFERCRTCCKSRGYNCVTHVKSTWIPSSATRSSSSPSERKKKLKIDKQSSPNVSLLPTTTSRQERGFREGLPGKIEAPAVFKRTRVTAISNNEQAEIGYQATVTISGHIFKGFLHYYGVDHNKAFPCLSQK.

Positions 41, 44, 52, 57, 61, and 68 each coordinate Zn(2+). Positions 41-68 form a DNA-binding region, zn(2)-C6 fungal-type; degenerate; the sequence is CRDCGNRAKKECLFERCRTCCKSRGYNC. Low complexity predominate over residues 79 to 88; the sequence is SSATRSSSSP. The disordered stretch occupies residues 79-121; the sequence is SSATRSSSSPSERKKKLKIDKQSSPNVSLLPTTTSRQERGFRE. The segment covering 100–113 has biased composition (polar residues); the sequence is QSSPNVSLLPTTTS. Positions 157 to 160 match the Required for homo- and heterodimerization motif; that stretch reads ISGH.

It belongs to the SHI protein family.

It localises to the nucleus. Its function is as follows. Transcription activator that binds DNA on 5'-ACTCTAC-3' and promotes auxin homeostasis-regulating gene expression (e.g. YUC genes), as well as genes affecting stamen development, cell expansion and timing of flowering. Synergistically with other SHI-related proteins, regulates gynoecium, stamen and leaf development in a dose-dependent manner, controlling apical-basal patterning. Promotes style and stigma formation, and influences vascular development during gynoecium development. May also have a role in the formation and/or maintenance of the shoot apical meristem (SAM). The chain is Protein SHI RELATED SEQUENCE 6 (SRS6) from Arabidopsis thaliana (Mouse-ear cress).